The chain runs to 329 residues: Glutamyl-tRNA reductase (329 aa).

Substrate is bound by residues 51-54, Ser99, 104-106, and Gln110; these read TCLR and EDQ. Cys52 serves as the catalytic Nucleophile. 179-184 is a binding site for NADP(+); sequence GIGELA.

This sequence belongs to the glutamyl-tRNA reductase family. As to quaternary structure, homodimer.

It carries out the reaction (S)-4-amino-5-oxopentanoate + tRNA(Glu) + NADP(+) = L-glutamyl-tRNA(Glu) + NADPH + H(+). It participates in porphyrin-containing compound metabolism; protoporphyrin-IX biosynthesis; 5-aminolevulinate from L-glutamyl-tRNA(Glu): step 1/2. Functionally, catalyzes the NADPH-dependent reduction of glutamyl-tRNA(Glu) to glutamate 1-semialdehyde (GSA). The chain is Glutamyl-tRNA reductase from Fusobacterium nucleatum subsp. nucleatum (strain ATCC 25586 / DSM 15643 / BCRC 10681 / CIP 101130 / JCM 8532 / KCTC 2640 / LMG 13131 / VPI 4355).